The following is a 506-amino-acid chain: Glutamate--tRNA ligase (506 aa).

A 'HIGH' region motif is present at residues 21-31 (PSPTGTPHVGM). A 'KMSKS' region motif is present at residues 265–269 (KLSKR). Position 268 (Lys268) interacts with ATP.

This sequence belongs to the class-I aminoacyl-tRNA synthetase family. Glutamate--tRNA ligase type 1 subfamily. Monomer.

The protein resides in the cytoplasm. The catalysed reaction is tRNA(Glu) + L-glutamate + ATP = L-glutamyl-tRNA(Glu) + AMP + diphosphate. Functionally, catalyzes the attachment of glutamate to tRNA(Glu) in a two-step reaction: glutamate is first activated by ATP to form Glu-AMP and then transferred to the acceptor end of tRNA(Glu). The protein is Glutamate--tRNA ligase of Bifidobacterium longum (strain DJO10A).